Reading from the N-terminus, the 47-residue chain is Large ribosomal subunit protein bL36B (47 aa).

It belongs to the bacterial ribosomal protein bL36 family.

In Pectobacterium atrosepticum (strain SCRI 1043 / ATCC BAA-672) (Erwinia carotovora subsp. atroseptica), this protein is Large ribosomal subunit protein bL36B.